The following is a 330-amino-acid chain: Beta-ketoacyl-[acyl-carrier-protein] synthase III (330 aa).

Residues cysteine 114 and histidine 255 contribute to the active site. The tract at residues 256–260 is ACP-binding; that stretch reads QANQR. Asparagine 285 is an active-site residue.

The protein belongs to the thiolase-like superfamily. FabH family. Homodimer.

It is found in the cytoplasm. The enzyme catalyses malonyl-[ACP] + acetyl-CoA + H(+) = 3-oxobutanoyl-[ACP] + CO2 + CoA. The protein operates within lipid metabolism; fatty acid biosynthesis. Its function is as follows. Catalyzes the condensation reaction of fatty acid synthesis by the addition to an acyl acceptor of two carbons from malonyl-ACP. Catalyzes the first condensation reaction which initiates fatty acid synthesis and may therefore play a role in governing the total rate of fatty acid production. Possesses both acetoacetyl-ACP synthase and acetyl transacylase activities. Its substrate specificity determines the biosynthesis of branched-chain and/or straight-chain of fatty acids. In Nostoc sp. (strain PCC 7120 / SAG 25.82 / UTEX 2576), this protein is Beta-ketoacyl-[acyl-carrier-protein] synthase III.